Reading from the N-terminus, the 349-residue chain is N-acetyltaurine hydrolase (349 aa).

A divalent metal cation-binding residues include His-26, His-28, Glu-169, His-201, His-230, and Asp-298.

This sequence belongs to the metallo-dependent hydrolases superfamily. Phosphotriesterase family. It depends on a divalent metal cation as a cofactor.

It localises to the cytoplasm. The protein resides in the cytosol. The catalysed reaction is N-acetyltaurine + H2O = taurine + acetate. It carries out the reaction N-propanoyltaurine + H2O = propanoate + taurine. The enzyme catalyses N-acetyl-L-methionine + H2O = L-methionine + acetate. It catalyses the reaction N-acetyl-L-isoleucine + H2O = L-isoleucine + acetate. The catalysed reaction is N-acetyl-L-leucine + H2O = L-leucine + acetate. It carries out the reaction N-acetyl-L-valine + H2O = L-valine + acetate. N-acetyltaurine hydrolase that catalyzes the hydrolysis of N-acetyltaurine into taurine and acetate. PTER also acts on other N-acetyl amino acids (Met, Ile, Leu, Val) and N-propionyltaurine, but at lower rates. This is N-acetyltaurine hydrolase (pter) from Xenopus tropicalis (Western clawed frog).